We begin with the raw amino-acid sequence, 270 residues long: Phospholipase A and acyltransferase 5 (270 aa).

2 disordered regions span residues 1–54 and 70–122; these read MGLS…SASS and RRLE…NPRP. 2 stretches are compositionally biased toward polar residues: residues 24-54 and 100-116; these read TQIS…SASS and IPTS…NQAV. Residues 127 to 240 enclose the LRAT domain; the sequence is LIEIFRIGYE…LRYGVPRSQQ (114 aa). Catalysis depends on residues His137 and His149. The Acyl-thioester intermediate role is filled by Cys224.

The protein belongs to the H-rev107 family. In terms of tissue distribution, isoform 4 shows highest expression level in testis.

It localises to the cytoplasm. Its subcellular location is the cytosol. It catalyses the reaction a 1,2-diacyl-sn-glycero-3-phosphocholine + H2O = a 1-acyl-sn-glycero-3-phosphocholine + a fatty acid + H(+). The catalysed reaction is a 1,2-diacyl-sn-glycero-3-phosphocholine + H2O = a 2-acyl-sn-glycero-3-phosphocholine + a fatty acid + H(+). It carries out the reaction 1-hexadecanoyl-2-(5Z,8Z,11Z,14Z-eicosatetraenoyl)-sn-glycero-3-phosphocholine + 1,2-di-(9Z-octadecenoyl)-sn-glycero-3-phosphoethanolamine = N-(5Z,8Z,11Z,14Z-eicosatetraenoyl)-1,2-di-(9Z-octadecenoyl)-sn-glycero-3-phosphoethanolamine + 1-hexadecanoyl-sn-glycero-3-phosphocholine + H(+). The enzyme catalyses 1,2-di-(9Z-octadecenoyl)-sn-glycero-3-phosphoethanolamine + 1,2-dihexadecanoyl-sn-glycero-3-phosphocholine = N-hexadecanoyl-1,2-di-(9Z-octadecenoyl)-sn-glycero-3-phosphoethanolamine + 1-hexadecanoyl-sn-glycero-3-phosphocholine + H(+). It catalyses the reaction 1,2-di-(9Z-octadecenoyl)-sn-glycero-3-phosphoethanolamine + 1,2-dihexadecanoyl-sn-glycero-3-phosphocholine = N-hexadecanoyl-1,2-di-(9Z-octadecenoyl)-sn-glycero-3-phosphoethanolamine + 2-hexadecanoyl-sn-glycero-3-phosphocholine + H(+). The catalysed reaction is a 1,2-diacyl-sn-glycero-3-phosphoethanolamine + a 1,2-diacyl-sn-glycero-3-phosphocholine = an N-acyl-1,2-diacyl-sn-glycero-3-phosphoethanolamine + a 1-acyl-sn-glycero-3-phosphocholine + H(+). It carries out the reaction a 1,2-diacyl-sn-glycero-3-phosphoethanolamine + a 1,2-diacyl-sn-glycero-3-phosphocholine = an N-acyl-1,2-diacyl-sn-glycero-3-phosphoethanolamine + a 2-acyl-sn-glycero-3-phosphocholine + H(+). The enzyme catalyses 1-hexadecanoyl-2-(9Z-octadecenoyl)-sn-glycero-3-phosphocholine + 1,2-di-(9Z-octadecenoyl)-sn-glycero-3-phosphoethanolamine = N,1,2-tri-(9Z-octadecenoyl)-sn-glycero-3-phosphoethanolamine + 1-hexadecanoyl-sn-glycero-3-phosphocholine + H(+). Exhibits both phospholipase A1/2 and acyltransferase activities. Shows phospholipase A1 (PLA1) and A2 (PLA2) activity, catalyzing the calcium-independent release of fatty acids from the sn-1 or sn-2 position of glycerophospholipids. Shows N-acyltransferase activity, catalyzing the calcium-independent transfer of a fatty acyl group at the sn-1 position of phosphatidylcholine (PC) and other glycerophospholipids to the primary amine of phosphatidylethanolamine (PE), forming N-acylphosphatidylethanolamine (NAPE), which serves as precursor for N-acylethanolamines (NAEs). This is Phospholipase A and acyltransferase 5 from Mus musculus (Mouse).